An 80-amino-acid chain; its full sequence is Sec-independent protein translocase protein TatA (80 aa).

Residues 1–21 form a helical membrane-spanning segment; that stretch reads MGISMWQLLIVLLIIVLLFGT. Positions 39–80 are disordered; sequence KKAMSDGESEEDKEPKKLSQNESRTIEGSVERNDAKTESKHS. A compositionally biased stretch (basic and acidic residues) spans 67–80; it reads SVERNDAKTESKHS.

The protein belongs to the TatA/E family. In terms of assembly, the Tat system comprises two distinct complexes: a TatABC complex, containing multiple copies of TatA, TatB and TatC subunits, and a separate TatA complex, containing only TatA subunits. Substrates initially bind to the TatABC complex, which probably triggers association of the separate TatA complex to form the active translocon.

It localises to the cell inner membrane. Functionally, part of the twin-arginine translocation (Tat) system that transports large folded proteins containing a characteristic twin-arginine motif in their signal peptide across membranes. TatA could form the protein-conducting channel of the Tat system. In Hahella chejuensis (strain KCTC 2396), this protein is Sec-independent protein translocase protein TatA.